The primary structure comprises 442 residues: MFYDQARIFVKGGDGGNGIVSFRREKYVPEGGPNGGDGGDGGNVIFIGDEGLRTLVDFRYQRHYKAERGEHGMGKNMHGRNGQDMTVRVPIGTVVKDAETGKILVDITCDGQQYIAARGGRGGRGNAKFVSSTNRVPLIAEKGEPGEEHWLELELKLLADVGLVGFPNVGKSTLIASVSAARPKIANYHFTTLEPNLGVVRIAEGQSFVMADIPGLIEGAHTGAGLGHDFLRHTERTRYLIHVLDISGSEGRDPLEDYDAINRELALYKPELADKPMVIAANKMDLPGAEENLARLREKLGEGAVIFPISAATRQGLEPLIYHVHKGLEELGPVVFERVTADAHMDVRFTGKTEERFKIHRDEQGVFVVTGKEVERHVAMTDMENEESVARLQRIFDVMGVDQALRDAGCQHGDPVRIGDLDFDFIEYAAQYAERDDDGENG.

The 158-residue stretch at 1-158 (MFYDQARIFV…HWLELELKLL (158 aa)) folds into the Obg domain. The OBG-type G domain occupies 159-329 (ADVGLVGFPN…LIYHVHKGLE (171 aa)). GTP contacts are provided by residues 165–172 (GFPNVGKS), 190–194 (FTTLE), 212–215 (DIPG), 282–285 (NKMD), and 310–312 (SAA). Residues S172 and T192 each coordinate Mg(2+). The region spanning 349–427 (FTGKTEERFK…IGDLDFDFIE (79 aa)) is the OCT domain.

It belongs to the TRAFAC class OBG-HflX-like GTPase superfamily. OBG GTPase family. Monomer. Requires Mg(2+) as cofactor.

Its subcellular location is the cytoplasm. Functionally, an essential GTPase which binds GTP, GDP and possibly (p)ppGpp with moderate affinity, with high nucleotide exchange rates and a fairly low GTP hydrolysis rate. Plays a role in control of the cell cycle, stress response, ribosome biogenesis and in those bacteria that undergo differentiation, in morphogenesis control. In Heliobacterium modesticaldum (strain ATCC 51547 / Ice1), this protein is GTPase Obg.